Here is a 224-residue protein sequence, read N- to C-terminus: UPF0758 protein Rpic_2712 (224 aa).

The region spanning 102–224 (TFESAQSVKD…VYGFLEHGKM (123 aa)) is the MPN domain. 3 residues coordinate Zn(2+): histidine 173, histidine 175, and aspartate 186. Positions 173 to 186 (HNHPTGNTEPSESD) match the JAMM motif motif.

Belongs to the UPF0758 family.

In Ralstonia pickettii (strain 12J), this protein is UPF0758 protein Rpic_2712.